The primary structure comprises 273 residues: Rhamnulose-1-phosphate aldolase (273 aa).

Glu-117 is an active-site residue. Zn(2+) is bound by residues His-140, His-142, and His-211.

The protein belongs to the aldolase class II family. RhaD subfamily. It depends on Zn(2+) as a cofactor.

Its subcellular location is the cytoplasm. It carries out the reaction L-rhamnulose 1-phosphate = (S)-lactaldehyde + dihydroxyacetone phosphate. It functions in the pathway carbohydrate degradation; L-rhamnose degradation; glycerone phosphate from L-rhamnose: step 3/3. Its function is as follows. Catalyzes the reversible cleavage of L-rhamnulose-1-phosphate to dihydroxyacetone phosphate (DHAP) and L-lactaldehyde. This chain is Rhamnulose-1-phosphate aldolase, found in Listeria innocua serovar 6a (strain ATCC BAA-680 / CLIP 11262).